Consider the following 139-residue polypeptide: Translation initiation factor 2 subunit beta (139 aa).

It belongs to the eIF-2-beta/eIF-5 family. As to quaternary structure, heterotrimer composed of an alpha, a beta and a gamma chain.

Its function is as follows. eIF-2 functions in the early steps of protein synthesis by forming a ternary complex with GTP and initiator tRNA. In Nanoarchaeum equitans (strain Kin4-M), this protein is Translation initiation factor 2 subunit beta.